The following is a 280-amino-acid chain: Apoptosis regulator ced-9 (280 aa).

The interval 33–59 (GTEPTDFGINSDAQDLPSPSRQASTRR) is disordered. The span at 43 to 59 (SDAQDLPSPSRQASTRR) shows a compositional bias: polar residues. The BH4 signature appears at 80 to 99 (IEGFVVDYFTHRIRQNGMEW). The BH1 signature appears at 160–179 (QTDQCPMSYGRLIGLISFGG). The short motif at 213-229 (NWKEHNRSWDDFMTLGK) is the BH2 element.

Belongs to the Bcl-2 family. As to quaternary structure, interacts with asymmetric homodimer ced-4; the interaction sequesters ced-4. Interacts with egl-1; the interaction results in ced-4 release. Interacts with dre-1; the interaction inhibits ced-9 activity, either directly or indirectly. Interacts with dct-1. May form a complex composed of ced-9, ced-4 and mac-1. Interacts with dynamin-related protein drp-1 (via residues 280-502); the interaction is enhanced by GTP rather than GDP; the interaction is probably direct and may occur at the mitochondrion. Interaction with drp-1 may be enhanced by interaction of ced-9 with egl-1, but not with ced-4. A ced-9/egl-1 complex may recruit drp-1 to the mitochondrial surface. Interacts with fzo-1; interaction may be suppressed by interaction of ced-9 with egl-1.

The protein resides in the perikaryon. It is found in the synapse. Its subcellular location is the endomembrane system. The protein localises to the mitochondrion membrane. It localises to the cytoplasm. Its function is as follows. Plays a major role in programmed cell death (PCD, apoptosis). egl-1 binds to and directly inhibits the activity of ced-9, releasing the cell death activator ced-4 from a ced-9/ced-4 containing protein complex and allowing ced-4 to activate the cell-killing caspase ced-3. During larval development, required for the elimination of transient presynaptic components downstream of egl-1 and upstream of ced-4 and ced-3 apoptotic pathway. Has been shown in one study to be dispensable in mitochondrial dynamics and morphology during early embryonic development. However, another study shows that a egl-1/ced-9 containing complex may promote drp-1-dependent mitochondrial fission. This is Apoptosis regulator ced-9 (ced-9) from Caenorhabditis elegans.